Reading from the N-terminus, the 289-residue chain is tRNA pseudouridine synthase B (289 aa).

The active-site Nucleophile is the Asp38.

Belongs to the pseudouridine synthase TruB family. Type 1 subfamily.

It carries out the reaction uridine(55) in tRNA = pseudouridine(55) in tRNA. Its function is as follows. Responsible for synthesis of pseudouridine from uracil-55 in the psi GC loop of transfer RNAs. The polypeptide is tRNA pseudouridine synthase B (Clostridium acetobutylicum (strain ATCC 824 / DSM 792 / JCM 1419 / IAM 19013 / LMG 5710 / NBRC 13948 / NRRL B-527 / VKM B-1787 / 2291 / W)).